The primary structure comprises 208 residues: Cysteine-rich protein 2 (208 aa).

One can recognise an LIM zinc-binding 1 domain in the interval 5–57 (CPKCDKTVYFAEKVSSLGKDWHRFCLRCEHCSKTLTPGGHAEHDGKPFCHKPC). Lys23 carries the N6-acetyllysine modification. A disordered region spans residues 98-117 (TEERKASGPPKGPSKASSVT). A Phosphoserine modification is found at Ser104. Over residues 104–115 (SGPPKGPSKASS) the composition is skewed to low complexity. Positions 126–178 (CPRCNKRVYFAEKVTSLGKDWHRPCLRCERCGKTLTPGGHAEHDGQPYCHKPC) constitute an LIM zinc-binding 2 domain. Lys138 and Lys144 each carry N6-acetyllysine.

In terms of assembly, interacts with TGFB1I1.

The protein is Cysteine-rich protein 2 (CRIP2) of Bos taurus (Bovine).